The sequence spans 109 residues: Parvalbumin beta (109 aa).

Residue serine 1 is modified to N-acetylserine. 2 EF-hand domains span residues lysine 38–serine 73 and leucine 77–alanine 109. 11 residues coordinate Ca(2+): aspartate 51, aspartate 53, serine 55, phenylalanine 57, glutamate 59, glutamate 62, aspartate 90, aspartate 92, aspartate 94, lysine 96, and glutamate 101.

It belongs to the parvalbumin family.

In muscle, parvalbumin is thought to be involved in relaxation after contraction. It binds two calcium ions. The sequence is that of Parvalbumin beta from Opsanus tau (Oyster toadfish).